Reading from the N-terminus, the 329-residue chain is Biotin synthase (329 aa).

A Radical SAM core domain is found at 46-275 (FFGRRLKLVR…LNPKAELRAS (230 aa)). [4Fe-4S] cluster contacts are provided by cysteine 64, cysteine 68, and cysteine 71. [2Fe-2S] cluster is bound by residues cysteine 108, cysteine 140, cysteine 200, and arginine 273.

The protein belongs to the radical SAM superfamily. Biotin synthase family. As to quaternary structure, homodimer. Requires [4Fe-4S] cluster as cofactor. It depends on [2Fe-2S] cluster as a cofactor.

It catalyses the reaction (4R,5S)-dethiobiotin + (sulfur carrier)-SH + 2 reduced [2Fe-2S]-[ferredoxin] + 2 S-adenosyl-L-methionine = (sulfur carrier)-H + biotin + 2 5'-deoxyadenosine + 2 L-methionine + 2 oxidized [2Fe-2S]-[ferredoxin]. It participates in cofactor biosynthesis; biotin biosynthesis; biotin from 7,8-diaminononanoate: step 2/2. In terms of biological role, catalyzes the conversion of dethiobiotin (DTB) to biotin by the insertion of a sulfur atom into dethiobiotin via a radical-based mechanism. This Thermus thermophilus (strain ATCC 27634 / DSM 579 / HB8) protein is Biotin synthase.